Here is a 483-residue protein sequence, read N- to C-terminus: UDP-N-acetylmuramate--L-alanine ligase (483 aa).

Residue Gly-112–Thr-118 participates in ATP binding.

This sequence belongs to the MurCDEF family.

The protein resides in the cytoplasm. It catalyses the reaction UDP-N-acetyl-alpha-D-muramate + L-alanine + ATP = UDP-N-acetyl-alpha-D-muramoyl-L-alanine + ADP + phosphate + H(+). Its pathway is cell wall biogenesis; peptidoglycan biosynthesis. Its function is as follows. Cell wall formation. The polypeptide is UDP-N-acetylmuramate--L-alanine ligase (Ralstonia nicotianae (strain ATCC BAA-1114 / GMI1000) (Ralstonia solanacearum)).